A 113-amino-acid polypeptide reads, in one-letter code: Non-structural protein 1 (113 aa).

This sequence belongs to the pneumovirus non-structural protein 1 family.

It is found in the host cytoplasm. It localises to the host mitochondrion. May play a minor role in antagonizing the type I IFN-mediated antiviral response. Additionally, NS1 may serve some inhibitory role in viral transcription and RNA replication. The protein is Non-structural protein 1 (1C) of Mus musculus (Mouse).